A 499-amino-acid polypeptide reads, in one-letter code: Probable alkaline/neutral invertase F (499 aa).

Ser11 carries the post-translational modification Phosphoserine. Thr20 carries the phosphothreonine modification. Ser497 is modified (phosphoserine).

It belongs to the glycosyl hydrolase 100 family.

The catalysed reaction is Hydrolysis of terminal non-reducing beta-D-fructofuranoside residues in beta-D-fructofuranosides.. Its function is as follows. Invertase that cleaves sucrose into glucose and fructose. The chain is Probable alkaline/neutral invertase F from Arabidopsis thaliana (Mouse-ear cress).